The sequence spans 426 residues: 26S proteasome regulatory subunit 7B (426 aa).

209–216 (GPPGTGKT) lines the ATP pocket.

It belongs to the AAA ATPase family.

Its subcellular location is the cytoplasm. The protein resides in the nucleus. In terms of biological role, the 26S proteasome is involved in the ATP-dependent degradation of ubiquitinated proteins. The regulatory (or ATPase) complex confers ATP dependency and substrate specificity to the 26S complex. The protein is 26S proteasome regulatory subunit 7B (RPT1B) of Oryza sativa subsp. japonica (Rice).